The primary structure comprises 154 residues: Urease accessory protein UreE (154 aa).

The interval 135 to 154 (PENGAYHGTGGHHHHHHDHE) is disordered. Positions 144–154 (GGHHHHHHDHE) are enriched in basic residues.

The protein belongs to the UreE family.

It is found in the cytoplasm. Functionally, involved in urease metallocenter assembly. Binds nickel. Probably functions as a nickel donor during metallocenter assembly. The polypeptide is Urease accessory protein UreE (Teredinibacter turnerae (strain ATCC 39867 / T7901)).